Consider the following 633-residue polypeptide: Biosynthetic arginine decarboxylase (633 aa).

Position 101 is an N6-(pyridoxal phosphate)lysine (Lys-101). Substrate is bound at residue 284-294 (VDVGGGLGVDY).

It belongs to the Orn/Lys/Arg decarboxylase class-II family. SpeA subfamily. Requires Mg(2+) as cofactor. Pyridoxal 5'-phosphate serves as cofactor.

The catalysed reaction is L-arginine + H(+) = agmatine + CO2. It participates in amine and polyamine biosynthesis; agmatine biosynthesis; agmatine from L-arginine: step 1/1. Its function is as follows. Catalyzes the biosynthesis of agmatine from arginine. In Aeromonas salmonicida (strain A449), this protein is Biosynthetic arginine decarboxylase.